The primary structure comprises 448 residues: Glutamyl-tRNA reductase (448 aa).

Substrate contacts are provided by residues 49–52, Ser-109, 114–116, and Gln-120; these read TCNR and ETQ. The active-site Nucleophile is the Cys-50. An NADP(+)-binding site is contributed by 189-194; the sequence is GAGEMS.

The protein belongs to the glutamyl-tRNA reductase family. Homodimer.

The catalysed reaction is (S)-4-amino-5-oxopentanoate + tRNA(Glu) + NADP(+) = L-glutamyl-tRNA(Glu) + NADPH + H(+). The protein operates within porphyrin-containing compound metabolism; protoporphyrin-IX biosynthesis; 5-aminolevulinate from L-glutamyl-tRNA(Glu): step 1/2. Its function is as follows. Catalyzes the NADPH-dependent reduction of glutamyl-tRNA(Glu) to glutamate 1-semialdehyde (GSA). The chain is Glutamyl-tRNA reductase from Staphylococcus aureus (strain NCTC 8325 / PS 47).